We begin with the raw amino-acid sequence, 147 residues long: MKCPFCGHLETQVVETRVSEDADFVRRRRQCSACDKRFTTYERPDVNFPVVVKKDGSRADFESGKVRASMMLALRKRPVSIEQIDNALLRIEQKLLASGLREIDSTKVGELVMRELKKLDKVAYVRFASVYRSFEDVDEFRQLLRDI.

A zinc finger lies at 3–34 (CPFCGHLETQVVETRVSEDADFVRRRRQCSAC). An ATP-cone domain is found at 49 to 139 (PVVVKKDGSR…VYRSFEDVDE (91 aa)).

Belongs to the NrdR family. It depends on Zn(2+) as a cofactor.

Functionally, negatively regulates transcription of bacterial ribonucleotide reductase nrd genes and operons by binding to NrdR-boxes. This Variovorax paradoxus (strain S110) protein is Transcriptional repressor NrdR.